Reading from the N-terminus, the 482-residue chain is Zinc finger protein 223 (482 aa).

Residues 8–78 (VTFKDVAVVF…DIATQREGNS (71 aa)) enclose the KRAB domain. C2H2-type zinc fingers lie at residues 176–198 (HSCDECGKSFCYISALHIHQRVH), 204–226 (FKCDVCGKEFSQSLHLQTHQRVH), 232–254 (FKCEQCGRGFRCRSALTVHCKLH), 260–282 (YNCEACGRAFIHDFQLQKHQRIH), and 288–310 (FKCEICSVSFRLRSSLNRHCVVH). The C2H2-type 6; degenerate zinc-finger motif lies at 316–338 (NSTGEYGKGFIRRLDLCKHQTIH). C2H2-type zinc fingers lie at residues 344-366 (YNCKECGKSFRRSSYLLIHQRVH), 372-394 (YKCDKCGKSYITKSGLDLHHRAH), and 400-422 (YNCDDCGKSFRQASSILNHKRLH). The segment at 428-450 (FKCEDCGKKLVYRSYRKDQQKNH) adopts a C2H2-type 10; degenerate zinc-finger fold.

Belongs to the krueppel C2H2-type zinc-finger protein family.

The protein localises to the nucleus. Functionally, may be involved in transcriptional regulation. The protein is Zinc finger protein 223 (ZNF223) of Homo sapiens (Human).